The sequence spans 361 residues: ATP-dependent 6-phosphofructokinase 1 (361 aa).

ATP is bound by residues G14, 79-80, and 116-119; these read KG and GDGS. D117 serves as a coordination point for Mg(2+). Residues 140 to 142, R177, 184 to 186, E237, R278, and 284 to 287 contribute to the substrate site; these read TID, MGR, and HIQR. The active-site Proton acceptor is D142.

It belongs to the phosphofructokinase type A (PFKA) family. Mixed-substrate PFK group III subfamily. In terms of assembly, homodimer or homotetramer. Mg(2+) serves as cofactor.

It localises to the cytoplasm. The catalysed reaction is beta-D-fructose 6-phosphate + ATP = beta-D-fructose 1,6-bisphosphate + ADP + H(+). Its pathway is carbohydrate degradation; glycolysis; D-glyceraldehyde 3-phosphate and glycerone phosphate from D-glucose: step 3/4. Functionally, catalyzes the phosphorylation of D-fructose 6-phosphate to fructose 1,6-bisphosphate by ATP, the first committing step of glycolysis. In Synechocystis sp. (strain ATCC 27184 / PCC 6803 / Kazusa), this protein is ATP-dependent 6-phosphofructokinase 1.